The following is a 213-amino-acid chain: Sclerostin (213 aa).

An N-terminal signal peptide occupies residues 1–23 (MQLPLALCLVCLLVHAAFRVVEG). The tract at residues 41 to 71 (GEYPEPPPELENNKTMNRAENGGRPPHHPFE) is disordered. An N-linked (GlcNAc...) asparagine glycan is attached at Asn53. Intrachain disulfides connect Cys80/Cys134, Cys94/Cys148, Cys105/Cys165, and Cys109/Cys167. The 91-residue stretch at 82 to 172 (ELHFTRYVTD…ASCKCKRLTR (91 aa)) folds into the CTCK domain. Residue Asn175 is glycosylated (N-linked (GlcNAc...) asparagine). A disordered region spans residues 178-213 (ELKDFGPEAARPQKGRKPRPRARGAKANQAELENAY). The segment covering 190-201 (QKGRKPRPRARG) has biased composition (basic residues).

The protein belongs to the sclerostin family. In terms of assembly, interacts with LRP4 (via the extracellular domain); the interaction facilitates the inhibition of Wnt signaling. Interacts with LRP5 (via the first two YWTD-EGF repeat domains); the interaction inhibits Wnt-mediated signaling. Interacts with LRP6.

It is found in the secreted. The protein localises to the extracellular space. The protein resides in the extracellular matrix. In terms of biological role, negative regulator of bone growth that acts through inhibition of Wnt signaling and bone formation. The sequence is that of Sclerostin from Chlorocebus aethiops (Green monkey).